We begin with the raw amino-acid sequence, 223 residues long: ATP-dependent dethiobiotin synthetase BioD (223 aa).

11–16 (DIGKTY) lines the ATP pocket. T15 lines the Mg(2+) pocket. The active site involves K36. Residue T40 participates in substrate binding. ATP-binding positions include D50, 110-113 (EGAG), and 174-175 (NN). D50 and E110 together coordinate Mg(2+).

This sequence belongs to the dethiobiotin synthetase family. As to quaternary structure, homodimer. Requires Mg(2+) as cofactor.

The protein localises to the cytoplasm. It carries out the reaction (7R,8S)-7,8-diammoniononanoate + CO2 + ATP = (4R,5S)-dethiobiotin + ADP + phosphate + 3 H(+). The protein operates within cofactor biosynthesis; biotin biosynthesis; biotin from 7,8-diaminononanoate: step 1/2. Catalyzes a mechanistically unusual reaction, the ATP-dependent insertion of CO2 between the N7 and N8 nitrogen atoms of 7,8-diaminopelargonic acid (DAPA, also called 7,8-diammoniononanoate) to form a ureido ring. This Staphylococcus epidermidis (strain ATCC 35984 / DSM 28319 / BCRC 17069 / CCUG 31568 / BM 3577 / RP62A) protein is ATP-dependent dethiobiotin synthetase BioD.